The primary structure comprises 400 residues: ATP phosphoribosyltransferase regulatory subunit (400 aa).

The protein belongs to the class-II aminoacyl-tRNA synthetase family. HisZ subfamily. In terms of assembly, heteromultimer composed of HisG and HisZ subunits.

The protein resides in the cytoplasm. The protein operates within amino-acid biosynthesis; L-histidine biosynthesis; L-histidine from 5-phospho-alpha-D-ribose 1-diphosphate: step 1/9. Its function is as follows. Required for the first step of histidine biosynthesis. May allow the feedback regulation of ATP phosphoribosyltransferase activity by histidine. In Hahella chejuensis (strain KCTC 2396), this protein is ATP phosphoribosyltransferase regulatory subunit.